Reading from the N-terminus, the 463-residue chain is Elongation factor 1-alpha (463 aa).

Residue G2 is modified to N,N,N-trimethylglycine. At K3 the chain carries N6,N6-dimethyllysine; alternate. K3 is subject to N6-methyllysine; alternate. In terms of domain architecture, tr-type G spans 5-239; the sequence is KNHVNVVVIG…DAIEPPSRPT (235 aa). The tract at residues 14–21 is G1; that stretch reads GHVDSGKS. Residue 14 to 21 coordinates GTP; the sequence is GHVDSGKS. Position 30 is an N6-methyllysine (K30). Residues 70–74 form a G2 region; sequence GITID. The residue at position 79 (K79) is an N6,N6,N6-trimethyllysine. The interval 91–94 is G3; the sequence is DAPG. Residues 91 to 95 and 153 to 156 contribute to the GTP site; these read DAPGH and NKMD. A G4 region spans residues 153–156; sequence NKMD. A G5 region spans residues 191–193; it reads SGW. K315 carries the N6,N6-dimethyllysine; alternate modification. K315 is modified (N6-methyllysine; alternate). Residue K389 is modified to N6-methyllysine.

Belongs to the TRAFAC class translation factor GTPase superfamily. Classic translation factor GTPase family. EF-Tu/EF-1A subfamily.

It localises to the cytoplasm. Functionally, this protein promotes the GTP-dependent binding of aminoacyl-tRNA to the A-site of ribosomes during protein biosynthesis. This is Elongation factor 1-alpha (TEF) from Puccinia graminis (Black stem rust fungus).